A 450-amino-acid chain; its full sequence is Phosphoglucosamine mutase (450 aa).

The active-site Phosphoserine intermediate is the S102. Mg(2+)-binding residues include S102, D243, D245, and D247. S102 bears the Phosphoserine mark.

The protein belongs to the phosphohexose mutase family. The cofactor is Mg(2+). Activated by phosphorylation.

The enzyme catalyses alpha-D-glucosamine 1-phosphate = D-glucosamine 6-phosphate. Its function is as follows. Catalyzes the conversion of glucosamine-6-phosphate to glucosamine-1-phosphate. This Rhizobium rhizogenes (strain K84 / ATCC BAA-868) (Agrobacterium radiobacter) protein is Phosphoglucosamine mutase.